The chain runs to 427 residues: Serine--tRNA ligase (427 aa).

231–233 contributes to the L-serine binding site; the sequence is TAE. 262 to 264 lines the ATP pocket; that stretch reads RSE. Glu285 contacts L-serine. Position 349–352 (349–352) interacts with ATP; that stretch reads EISS. Residue Ser385 participates in L-serine binding.

The protein belongs to the class-II aminoacyl-tRNA synthetase family. Type-1 seryl-tRNA synthetase subfamily. As to quaternary structure, homodimer. The tRNA molecule binds across the dimer.

It is found in the cytoplasm. It catalyses the reaction tRNA(Ser) + L-serine + ATP = L-seryl-tRNA(Ser) + AMP + diphosphate + H(+). The enzyme catalyses tRNA(Sec) + L-serine + ATP = L-seryl-tRNA(Sec) + AMP + diphosphate + H(+). The protein operates within aminoacyl-tRNA biosynthesis; selenocysteinyl-tRNA(Sec) biosynthesis; L-seryl-tRNA(Sec) from L-serine and tRNA(Sec): step 1/1. Catalyzes the attachment of serine to tRNA(Ser). Is also able to aminoacylate tRNA(Sec) with serine, to form the misacylated tRNA L-seryl-tRNA(Sec), which will be further converted into selenocysteinyl-tRNA(Sec). In Rhizobium rhizogenes (strain K84 / ATCC BAA-868) (Agrobacterium radiobacter), this protein is Serine--tRNA ligase.